The chain runs to 161 residues: Sec-independent protein translocase protein TatB (161 aa).

Residues 2–22 (FNDIGALELVTLVVLAVLVFG) form a helical membrane-spanning segment. Positions 102 to 161 (DAVHGRDAESSSSGSSSGSSSAASGNGRVDMSKKPEKPEKPGKTDKPAADDRPPFDMDAT) are disordered. Residues 111–126 (SSSSGSSSGSSSAASG) show a composition bias toward low complexity. Basic and acidic residues predominate over residues 131–161 (DMSKKPEKPEKPGKTDKPAADDRPPFDMDAT).

This sequence belongs to the TatB family. The Tat system comprises two distinct complexes: a TatABC complex, containing multiple copies of TatA, TatB and TatC subunits, and a separate TatA complex, containing only TatA subunits. Substrates initially bind to the TatABC complex, which probably triggers association of the separate TatA complex to form the active translocon.

The protein resides in the cell membrane. Its function is as follows. Part of the twin-arginine translocation (Tat) system that transports large folded proteins containing a characteristic twin-arginine motif in their signal peptide across membranes. Together with TatC, TatB is part of a receptor directly interacting with Tat signal peptides. TatB may form an oligomeric binding site that transiently accommodates folded Tat precursor proteins before their translocation. The protein is Sec-independent protein translocase protein TatB of Streptomyces coelicolor (strain ATCC BAA-471 / A3(2) / M145).